The sequence spans 463 residues: Probable glycosyltransferase 3 (463 aa).

Residues 1–24 are Cytoplasmic-facing; that stretch reads MAVTGGGRPAVRQQAARGKQMQRT. Residues 25–47 traverse the membrane as a helical; Signal-anchor for type II membrane protein segment; that stretch reads FNNVKITLICGFITLLVLRGTVG. Residues 48 to 463 lie on the Lumenal side of the membrane; it reads INLLTYGVGG…ALKMDAKIES (416 aa). The tract at residues 82–125 is disordered; it reads EIRSDTDDDDDDEEEEPLGVDASTTTTTNSTTTTATAARRRSSN. A compositionally biased stretch (acidic residues) spans 87–99; sequence TDDDDDDEEEEPL. The span at 103–118 shows a compositional bias: low complexity; that stretch reads ASTTTTTNSTTTTATA. Asn-110, Asn-125, and Asn-442 each carry an N-linked (GlcNAc...) asparagine glycan.

This sequence belongs to the glycosyltransferase 34 family.

It localises to the golgi apparatus membrane. Its function is as follows. Probable glycosyltransferase that may be involved in the biosynthesis of xyloglucan. This chain is Probable glycosyltransferase 3, found in Oryza sativa subsp. japonica (Rice).